The chain runs to 284 residues: Tropomyosin (284 aa).

A coiled-coil region spans residues 1 to 284 (MDGIKKKMIA…DQTFAELTGY (284 aa)). Composition is skewed to basic and acidic residues over residues 29 to 42 (LKQK…KETE) and 111 to 136 (AKFD…RSIA). Disordered regions lie at residues 29–49 (LKQK…LNNR) and 111–149 (AKFD…DQQK).

It belongs to the tropomyosin family.

Functionally, tropomyosin, in association with the troponin complex, plays a central role in the calcium dependent regulation of muscle contraction. This is Tropomyosin from Clonorchis sinensis (Chinese liver fluke).